Consider the following 116-residue polypeptide: Protein V2 (116 aa).

The protein belongs to the geminiviridae protein AV2/V2 family. Interacts with host SGS3.

The protein localises to the host cytoplasm. It is found in the host perinuclear region. Its function is as follows. Through its interaction with host SGS3, acts as a suppressor of RNA-mediated gene silencing, also known as post-transcriptional gene silencing (PTGS), a mechanism of plant viral defense that limits the accumulation of viral RNAs. This chain is Protein V2, found in Tomato yellow leaf curl virus (strain Israel) (TYLCV).